Consider the following 100-residue polypeptide: Urease subunit gamma (100 aa).

The protein belongs to the urease gamma subunit family. Heterotrimer of UreA (gamma), UreB (beta) and UreC (alpha) subunits. Three heterotrimers associate to form the active enzyme.

The protein localises to the cytoplasm. The enzyme catalyses urea + 2 H2O + H(+) = hydrogencarbonate + 2 NH4(+). It participates in nitrogen metabolism; urea degradation; CO(2) and NH(3) from urea (urease route): step 1/1. This is Urease subunit gamma from Pseudomonas fluorescens (strain ATCC BAA-477 / NRRL B-23932 / Pf-5).